Here is a 323-residue protein sequence, read N- to C-terminus: o-succinylbenzoate synthase (323 aa).

Residue Lys-134 is the Proton donor of the active site. Residues Asp-162, Glu-191, and Asp-214 each coordinate Mg(2+). Lys-236 functions as the Proton acceptor in the catalytic mechanism.

The protein belongs to the mandelate racemase/muconate lactonizing enzyme family. MenC type 1 subfamily. Requires a divalent metal cation as cofactor.

The enzyme catalyses (1R,6R)-6-hydroxy-2-succinyl-cyclohexa-2,4-diene-1-carboxylate = 2-succinylbenzoate + H2O. Its pathway is quinol/quinone metabolism; 1,4-dihydroxy-2-naphthoate biosynthesis; 1,4-dihydroxy-2-naphthoate from chorismate: step 4/7. The protein operates within quinol/quinone metabolism; menaquinone biosynthesis. Converts 2-succinyl-6-hydroxy-2,4-cyclohexadiene-1-carboxylate (SHCHC) to 2-succinylbenzoate (OSB). The protein is o-succinylbenzoate synthase of Edwardsiella ictaluri (strain 93-146).